A 204-amino-acid chain; its full sequence is Nicotine blue oxidoreductase (204 aa).

In terms of assembly, homotetramer. FMN is required as a cofactor.

The catalysed reaction is 3,3'-bipyridine-2,2',5,5',6,6'-hexol + NADP(+) = (E)-2,2',5,5'-tetrahydroxy-6H,6'H-(3,3'-bipyridinylidene)-6,6'-dione + NADPH + 3 H(+). It catalyses the reaction 3,3'-bipyridine-2,2',5,5',6,6'-hexol + NAD(+) = (E)-2,2',5,5'-tetrahydroxy-6H,6'H-(3,3'-bipyridinylidene)-6,6'-dione + NADH + 3 H(+). The protein operates within alkaloid degradation; nicotine degradation. Functionally, catalyzes the reduction of nicotine blue to its hydroquinone form. Nicotine blue is the name given to the compound formed by the autocatalytic condensation of two molecules of 2,3,6-trihydroxypyridine, an intermediate in the nicotine degradation pathway. May play a role in preventing the intracellular formation of nicotine blue semiquinone radicals, which by redox cycling would lead to the formation of toxic reactive oxygen species. Besides nicotine blue, several other quinones are reduced by nboR. The protein is Nicotine blue oxidoreductase (nboR) of Paenarthrobacter nicotinovorans (Arthrobacter nicotinovorans).